An 83-amino-acid chain; its full sequence is Molybdopterin synthase sulfur carrier subunit (83 aa).

The residue at position 83 (glycine 83) is a 1-thioglycine; alternate. Glycine 83 bears the Glycyl adenylate; alternate mark.

The protein belongs to the MoaD family. MOCS2A subfamily. As to quaternary structure, heterotetramer; composed of 2 small (MOCS2A) and 2 large (MOCS2B) subunits. Post-translationally, C-terminal thiocarboxylation occurs in 2 steps, it is first acyl-adenylated (-COAMP) via the hesA/moeB/thiF part of MOCS3, then thiocarboxylated (-COSH) via the rhodanese domain of MOCS3.

It localises to the cytoplasm. It participates in cofactor biosynthesis; molybdopterin biosynthesis. Acts as a sulfur carrier required for molybdopterin biosynthesis. Component of the molybdopterin synthase complex that catalyzes the conversion of precursor Z into molybdopterin by mediating the incorporation of 2 sulfur atoms into precursor Z to generate a dithiolene group. In the complex, serves as sulfur donor by being thiocarboxylated (-COSH) at its C-terminus by MOCS3. After interaction with MOCS2B, the sulfur is then transferred to precursor Z to form molybdopterin. The sequence is that of Molybdopterin synthase sulfur carrier subunit from Chlamydomonas reinhardtii (Chlamydomonas smithii).